The primary structure comprises 192 residues: UPF0312 protein ECA1782 (192 aa).

The N-terminal stretch at 1 to 23 (MLKKTLLSLTAVSMLASAGSALA) is a signal peptide.

Belongs to the UPF0312 family. Type 1 subfamily.

It is found in the periplasm. The protein is UPF0312 protein ECA1782 of Pectobacterium atrosepticum (strain SCRI 1043 / ATCC BAA-672) (Erwinia carotovora subsp. atroseptica).